The chain runs to 880 residues: Alanine--tRNA ligase (880 aa).

4 residues coordinate Zn(2+): His569, His573, Cys671, and His675.

Belongs to the class-II aminoacyl-tRNA synthetase family. In terms of assembly, homotetramer. Zn(2+) is required as a cofactor.

The protein localises to the cytoplasm. The catalysed reaction is tRNA(Ala) + L-alanine + ATP = L-alanyl-tRNA(Ala) + AMP + diphosphate. Catalyzes the attachment of alanine to tRNA(Ala) in a two-step reaction: alanine is first activated by ATP to form Ala-AMP and then transferred to the acceptor end of tRNA(Ala). Also edits incorrectly charged Ser-tRNA(Ala) and Gly-tRNA(Ala) via its editing domain. This chain is Alanine--tRNA ligase, found in Buchnera aphidicola subsp. Baizongia pistaciae (strain Bp).